The following is a 245-amino-acid chain: Transmembrane and ubiquitin-like domain-containing protein 1 (245 aa).

The required to release iHOPS from membranes stretch occupies residues 2–30; sequence ALIEGVGDEVTVLFSVLACLLVLALAWVS. Residues 11–31 form a helical membrane-spanning segment; the sequence is VTVLFSVLACLLVLALAWVST. The segment covering 34 to 51 has biased composition (polar residues); that stretch reads TESTDPLPQSSGTTTPAQ. Residues 34–100 form a disordered region; it reads TESTDPLPQS…ASTPPDSPQE (67 aa). Phosphoserine occurs at positions 73, 97, and 126. The Ubiquitin-like domain occupies 102–175; the sequence is LLLRLKFLND…LHCHVSTRVG (74 aa). 2 helical membrane passes run 194 to 214 and 219 to 239; these read IGSL…YCQI and FFPL…SLLA.

Interacts with EEF1A1, GRIA2, GRIP1. Interacts with CAMLG, TUBG1. Interacts with NPM1 and CDKN2A; TMUB1 can enhance interaction between NPM1 and CDKN2A and is proposed to bridge the proteins; proposed to be mediated by iHOPS. Interacts with ERLIN2 and AMFR; TMUB1 promotes the interaction of ERLIN2 with AMFR. In terms of processing, processed by regulated intramembrane proteolysis (RIP) in the N-terminus to release iHOPS from membranes.

It is found in the membrane. The protein resides in the postsynaptic cell membrane. Its subcellular location is the recycling endosome. It localises to the cytoplasm. The protein localises to the cytoskeleton. It is found in the microtubule organizing center. The protein resides in the centrosome. Its subcellular location is the nucleus. It localises to the nucleolus. In terms of biological role, involved in sterol-regulated ubiquitination and degradation of HMG-CoA reductase HMGCR. Involved in positive regulation of AMPA-selective glutamate receptor GRIA2 recycling to the cell surface. Acts as a negative regulator of hepatocyte growth during regeneration. Its function is as follows. May contribute to the regulation of translation during cell-cycle progression. May contribute to the regulation of cell proliferation. May be involved in centrosome assembly. Modulates stabilization and nucleolar localization of tumor suppressor CDKN2A and enhances association between CDKN2A and NPM1. The polypeptide is Transmembrane and ubiquitin-like domain-containing protein 1 (Tmub1) (Rattus norvegicus (Rat)).